A 238-amino-acid chain; its full sequence is Ribonuclease PH (238 aa).

Residues Arg86 and 124-126 (GTR) each bind phosphate.

The protein belongs to the RNase PH family. Homohexameric ring arranged as a trimer of dimers.

It carries out the reaction tRNA(n+1) + phosphate = tRNA(n) + a ribonucleoside 5'-diphosphate. Functionally, phosphorolytic 3'-5' exoribonuclease that plays an important role in tRNA 3'-end maturation. Removes nucleotide residues following the 3'-CCA terminus of tRNAs; can also add nucleotides to the ends of RNA molecules by using nucleoside diphosphates as substrates, but this may not be physiologically important. Probably plays a role in initiation of 16S rRNA degradation (leading to ribosome degradation) during starvation. This Sphingopyxis alaskensis (strain DSM 13593 / LMG 18877 / RB2256) (Sphingomonas alaskensis) protein is Ribonuclease PH.